Consider the following 121-residue polypeptide: Fumarate reductase subunit D (121 aa).

3 helical membrane-spanning segments follow: residues 22-42 (GVWFAMITPVTVLLMGILLPL), 57-77 (AFVSHPIGGAFTVLSLSLPMW), and 100-120 (YACYLAAALVTVLATVWVIQL).

It belongs to the FrdD family. In terms of assembly, part of an enzyme complex containing four subunits: a flavoprotein (FrdA), an iron-sulfur protein (FrdB), and two hydrophobic anchor proteins (FrdC and FrdD).

The protein resides in the cell inner membrane. Functionally, anchors the catalytic components of the fumarate reductase complex to the cell membrane, binds quinones. This chain is Fumarate reductase subunit D, found in Shewanella putrefaciens (strain CN-32 / ATCC BAA-453).